Here is a 290-residue protein sequence, read N- to C-terminus: Ribosomal RNA small subunit methyltransferase A (290 aa).

The S-adenosyl-L-methionine site is built by N27, L29, G54, E75, D100, and N125.

It belongs to the class I-like SAM-binding methyltransferase superfamily. rRNA adenine N(6)-methyltransferase family. RsmA subfamily.

Its subcellular location is the cytoplasm. The catalysed reaction is adenosine(1518)/adenosine(1519) in 16S rRNA + 4 S-adenosyl-L-methionine = N(6)-dimethyladenosine(1518)/N(6)-dimethyladenosine(1519) in 16S rRNA + 4 S-adenosyl-L-homocysteine + 4 H(+). Specifically dimethylates two adjacent adenosines (A1518 and A1519) in the loop of a conserved hairpin near the 3'-end of 16S rRNA in the 30S particle. May play a critical role in biogenesis of 30S subunits. In Streptococcus pneumoniae (strain P1031), this protein is Ribosomal RNA small subunit methyltransferase A.